We begin with the raw amino-acid sequence, 329 residues long: MQGSVTEFLKPHLVNIEQVSSTHAKVTLEPLERGFGHTLGNALRRILLSSMPGCAVTEVEIDGVLHEYSSKEGVQEDILEVLLNLKGLAVKVSGKDDIILTLNKSGIGPVTAADITHDGDVEIVNPHHVICHLTDKDASISMRIRVQRGRGYVPASARVHSQDEDRPIGRLLVDARFSPVDRIAYNVESARVEQRTDLDKLIIEMETNGTIDPEEAIRRAATILAEQLDAFVDLRDVRQPEVKEEKPEFDPILLRPVDDLELTVRSHNCLKAETIHYICDLVQRTEVELLKTPNLGKKSLTEIKDVLASRGLSLGMRLENWPPASIAED.

The alpha N-terminal domain (alpha-NTD) stretch occupies residues 1–235; the sequence is MQGSVTEFLK…EQLDAFVDLR (235 aa). Residues 249 to 329 are alpha C-terminal domain (alpha-CTD); that stretch reads FDPILLRPVD…NWPPASIAED (81 aa).

This sequence belongs to the RNA polymerase alpha chain family. Homodimer. The RNAP catalytic core consists of 2 alpha, 1 beta, 1 beta' and 1 omega subunit. When a sigma factor is associated with the core the holoenzyme is formed, which can initiate transcription.

The catalysed reaction is RNA(n) + a ribonucleoside 5'-triphosphate = RNA(n+1) + diphosphate. Its function is as follows. DNA-dependent RNA polymerase catalyzes the transcription of DNA into RNA using the four ribonucleoside triphosphates as substrates. This Actinobacillus pleuropneumoniae serotype 5b (strain L20) protein is DNA-directed RNA polymerase subunit alpha.